We begin with the raw amino-acid sequence, 331 residues long: Anthranilate phosphoribosyltransferase (331 aa).

Residues G78, G81 to D82, T86, N88 to T91, K106 to S114, and S118 contribute to the 5-phospho-alpha-D-ribose 1-diphosphate site. Residue G78 coordinates anthranilate. A Mg(2+)-binding site is contributed by S90. Position 109 (N109) interacts with anthranilate. R164 is an anthranilate binding site. Positions 222 and 223 each coordinate Mg(2+).

This sequence belongs to the anthranilate phosphoribosyltransferase family. In terms of assembly, homodimer. The cofactor is Mg(2+).

The catalysed reaction is N-(5-phospho-beta-D-ribosyl)anthranilate + diphosphate = 5-phospho-alpha-D-ribose 1-diphosphate + anthranilate. Its pathway is amino-acid biosynthesis; L-tryptophan biosynthesis; L-tryptophan from chorismate: step 2/5. In terms of biological role, catalyzes the transfer of the phosphoribosyl group of 5-phosphorylribose-1-pyrophosphate (PRPP) to anthranilate to yield N-(5'-phosphoribosyl)-anthranilate (PRA). The protein is Anthranilate phosphoribosyltransferase of Haloferax volcanii (strain ATCC 29605 / DSM 3757 / JCM 8879 / NBRC 14742 / NCIMB 2012 / VKM B-1768 / DS2) (Halobacterium volcanii).